The following is a 190-amino-acid chain: Guanylate kinase (190 aa).

Residues 8–186 enclose the Guanylate kinase-like domain; that stretch reads ARPTVLTGPS…ALAELEKQMN (179 aa). 15-22 contributes to the ATP binding site; the sequence is GPSGVGKG.

The protein belongs to the guanylate kinase family.

It is found in the cytoplasm. It catalyses the reaction GMP + ATP = GDP + ADP. The enzyme catalyses dZMP + ATP = dZDP + ADP. The protein operates within purine metabolism. Essential for recycling GMP and indirectly, cGMP. Its function is as follows. (Microbial infection) Catalyzes the phosphorylation of dZMP to dZDP, when the bacterium is infected by a phage that produces the substrate for the synthesis of dZTP (2- amino-2'-deoxyadenosine 5'-triphosphate), which is then used by the phage as a DNA polymerase substrate. In Synechococcus sp. (strain CC9311), this protein is Guanylate kinase.